We begin with the raw amino-acid sequence, 1588 residues long: MVQLAKVPILGNDIIHVGYNIHDHLVETIIKHCPSSTYVICNDTNLSKVPYYQQLVLEFKASLPEGSRLLTYVVKPGETSKSRETKAQLEDYLLVEGCTRDTVMIAIGGGVIGDMIGFVASTFMRGVRVVQVPTSLLAMVDSSIGGKTAIDTPLGKNFIGAFWQPKFVLVDIKWLETLAKREFINGMAEVIKTACIWNADEFTRLESNASLFLNVVNGAKNVKVTNQLTNEIDEISNTDIEAMLDHTYKLVLESIKVKAEVVSSDERESSLRNLLNFGHSIGHAYEAILTPQALHGECVSIGMVKEAELSRYFGILSPTQVARLSKILVAYGLPVSPDEKWFKELTLHKKTPLDILLKKMSIDKKNEGSKKKVVILESIGKCYGDSAQFVSDEDLRFILTDETLVYPFKDIPADQQKVVIPPGSKSISNRALIIAALGEGQCKIKNLLHSDDTKHMLTAVHELKGATISWEDNGETVVVEGHGGSTLSACADPLYLGNAGTASRFLTSLAALVNSTPSQKYIVLTGNARMQQRPIAPLVDSLRANGTKIEYLNNEGSLPIKVYTDSVFKGGRIELAATVSSQYVSSILMCAPYAEEPVTLALVGGKPISKLYVDMTIKMMEKFGINVETSTTEPYTYYIPKGHYINPSEYVIESDASSATYPLAFAAMTGTTVTVPNIGFESLQGDARFARDVLKPMGCKITQTATSTTVSGPPVGTLKPLKHVDMEPMTDAFLTACVVAAISHDSDPNSANTTTIEGIANQRVKECNRILAMATELAKFGVKTTELPDGIQVHGLNSIKDLKVPSDSSGPVGVCTYDDHRVAMSFSLLAGMVNSQNERDEVANPVRILERHCTGKTWPGWWDVLHSELGAKLDGAEPLECTSKKNSKKSVVIIGMRAAGKTTISKWCASALGYKLVDLDELFEQQHNNQSVKQFVVENGWEKFREEETRIFKEVIQNYGDDGYVFSTGGGIVESAESRKALKDFASSGGYVLHLHRDIEETIVFLQSDPSRPAYVEEIREVWNRREEWYKECSNFSFFAPHCSAEAEFQALRRSFSKYIATITGVREIEIPSGRSAFVCLTFDDLTEQTENLTPICYGCEAVEVRVDHLANYSADFVSKQLSILRKATDSIPIIFTVRTKKQGGNFPDEEFKTLRELYDIALKNGVEFLDLELTLPTDIQYEVINKRGNTKIIGSHHDFQGLYSWDDAEWENRFNQALTLDVDVVKFVGTAVNFEDNLRLEHFRDTHKNKPLIAVNMTSKGSISRVLNNVLTPVTSDLLPNSAAPGQLTVAQINKMYTSMGGIEPKELFVVGKPIGHSRSPILHNTGYEILGLPHKFDKFETESAQLVKEKLLDGNKNFGGAAVTIPLKLDIMQYMDELTDAAKVIGAVNTVIPLGNKKFKGDNTDWLGIRNALINNGVPEYVGHTAGLVIGAGGTSRAALYALHSLGCKKIFIINRTTSKLKPLIESLPSEFNIIGIESTKSIEEIKEHVGVAVSCVPADKPLDDELLSKLERFLVKGAHAAFAPTLLEAAYKPSVTPVMTISQDKYQWHVVPGSQMLVHQGVAQFEKWTGFKAPFKAIFDAVTKE.

A 3-dehydroquinate synthase region spans residues 1–392; sequence MVQLAKVPIL…YGDSAQFVSD (392 aa). NAD(+) contacts are provided by residues 43–45, 78–81, 109–111, and Asp-114; these read DTN, ETSK, and GGV. Residue Arg-125 participates in 7-phospho-2-dehydro-3-deoxy-D-arabino-heptonate binding. 134–135 is a binding site for NAD(+); it reads TS. 7-phospho-2-dehydro-3-deoxy-D-arabino-heptonate is bound by residues Asp-141 and Lys-147. Lys-156 contributes to the NAD(+) binding site. Residue Asn-157 participates in 7-phospho-2-dehydro-3-deoxy-D-arabino-heptonate binding. NAD(+) is bound by residues 174 to 177 and Asn-185; that span reads WLET. A Zn(2+)-binding site is contributed by Glu-189. Residues 189–192 and Lys-258 each bind 7-phospho-2-dehydro-3-deoxy-D-arabino-heptonate; that span reads EVIK. Residue Glu-268 is the Proton acceptor; for 3-dehydroquinate synthase activity of the active site. Residues 272–276 and His-279 each bind 7-phospho-2-dehydro-3-deoxy-D-arabino-heptonate; that span reads RNLLN. A Zn(2+)-binding site is contributed by His-279. His-283 acts as the Proton acceptor; for 3-dehydroquinate synthase activity in catalysis. 7-phospho-2-dehydro-3-deoxy-D-arabino-heptonate contacts are provided by His-295 and Lys-364. Position 295 (His-295) interacts with Zn(2+). The tract at residues 405–871 is EPSP synthase; that stretch reads VYPFKDIPAD…WDVLHSELGA (467 aa). The active-site For EPSP synthase activity is Cys-853. The shikimate kinase stretch occupies residues 890–1080; sequence SVVIIGMRAA…IPSGRSAFVC (191 aa). 895-902 provides a ligand contact to ATP; sequence GMRAAGKT. The segment at 1081-1293 is 3-dehydroquinase; it reads LTFDDLTEQT…AAPGQLTVAQ (213 aa). The Proton acceptor; for 3-dehydroquinate dehydratase activity role is filled by His-1198. The active-site Schiff-base intermediate with substrate; for 3-dehydroquinate dehydratase activity is Lys-1227. A shikimate dehydrogenase region spans residues 1306–1588; that stretch reads PKELFVVGKP…KAIFDAVTKE (283 aa).

It in the N-terminal section; belongs to the sugar phosphate cyclases superfamily. Dehydroquinate synthase family. The protein in the 2nd section; belongs to the EPSP synthase family. In the 3rd section; belongs to the shikimate kinase family. This sequence in the 4th section; belongs to the type-I 3-dehydroquinase family. It in the C-terminal section; belongs to the shikimate dehydrogenase family. In terms of assembly, homodimer. Requires Zn(2+) as cofactor.

The protein localises to the cytoplasm. The enzyme catalyses 7-phospho-2-dehydro-3-deoxy-D-arabino-heptonate = 3-dehydroquinate + phosphate. It catalyses the reaction 3-dehydroquinate = 3-dehydroshikimate + H2O. The catalysed reaction is shikimate + NADP(+) = 3-dehydroshikimate + NADPH + H(+). It carries out the reaction shikimate + ATP = 3-phosphoshikimate + ADP + H(+). The enzyme catalyses 3-phosphoshikimate + phosphoenolpyruvate = 5-O-(1-carboxyvinyl)-3-phosphoshikimate + phosphate. Its pathway is metabolic intermediate biosynthesis; chorismate biosynthesis; chorismate from D-erythrose 4-phosphate and phosphoenolpyruvate: step 2/7. It functions in the pathway metabolic intermediate biosynthesis; chorismate biosynthesis; chorismate from D-erythrose 4-phosphate and phosphoenolpyruvate: step 3/7. It participates in metabolic intermediate biosynthesis; chorismate biosynthesis; chorismate from D-erythrose 4-phosphate and phosphoenolpyruvate: step 4/7. The protein operates within metabolic intermediate biosynthesis; chorismate biosynthesis; chorismate from D-erythrose 4-phosphate and phosphoenolpyruvate: step 5/7. Its pathway is metabolic intermediate biosynthesis; chorismate biosynthesis; chorismate from D-erythrose 4-phosphate and phosphoenolpyruvate: step 6/7. The AROM polypeptide catalyzes 5 consecutive enzymatic reactions in prechorismate polyaromatic amino acid biosynthesis. The polypeptide is Pentafunctional AROM polypeptide (Saccharomyces cerevisiae (strain JAY291) (Baker's yeast)).